A 235-amino-acid chain; its full sequence is Large ribosomal subunit protein uL1 (235 aa).

It belongs to the universal ribosomal protein uL1 family. Part of the 50S ribosomal subunit.

Binds directly to 23S rRNA. The L1 stalk is quite mobile in the ribosome, and is involved in E site tRNA release. Its function is as follows. Protein L1 is also a translational repressor protein, it controls the translation of the L11 operon by binding to its mRNA. This is Large ribosomal subunit protein uL1 from Thermobifida fusca (strain YX).